Here is an 865-residue protein sequence, read N- to C-terminus: Outer membrane usher protein HtrE (865 aa).

The signal sequence occupies residues 1-29 (MTIEYTKNYHHLTRIATFCALLYCNTAFS). Cys838 and Cys862 are disulfide-bonded.

The protein belongs to the fimbrial export usher family.

The protein resides in the cell outer membrane. Functionally, part of the yadCKLM-htrE-yadVN fimbrial operon. Could contribute to adhesion to various surfaces in specific environmental niches. Probably involved in the export and assembly of fimbrial subunits across the outer membrane. The sequence is that of Outer membrane usher protein HtrE (htrE) from Escherichia coli (strain K12).